A 231-amino-acid polypeptide reads, in one-letter code: Large ribosomal subunit protein uL1 (231 aa).

Belongs to the universal ribosomal protein uL1 family. In terms of assembly, part of the 50S ribosomal subunit.

Functionally, binds directly to 23S rRNA. The L1 stalk is quite mobile in the ribosome, and is involved in E site tRNA release. Protein L1 is also a translational repressor protein, it controls the translation of the L11 operon by binding to its mRNA. In Methylococcus capsulatus (strain ATCC 33009 / NCIMB 11132 / Bath), this protein is Large ribosomal subunit protein uL1.